The chain runs to 302 residues: Small ribosomal subunit protein uS2 (302 aa).

A disordered region spans residues 275–302 (EGEGESEAEPVVAKKKPVRAKRPAVKAE). Basic residues predominate over residues 287–302 (AKKKPVRAKRPAVKAE).

It belongs to the universal ribosomal protein uS2 family.

This Opitutus terrae (strain DSM 11246 / JCM 15787 / PB90-1) protein is Small ribosomal subunit protein uS2.